A 574-amino-acid chain; its full sequence is K(+)/H(+) antiporter NhaP2 (574 aa).

A run of 13 helical transmembrane segments spans residues 6–26, 34–54, 58–78, 87–107, 109–129, 173–193, 196–216, 219–239, 242–262, 271–291, 299–319, 335–355, and 359–379; these read INSF…LSPM, ILLI…GGIL, YSTA…DGGM, VALW…TSIT, VMAA…GAIV, IAIL…ISFI, FGLG…LVNV, LAEG…YATS, LGGS…NKPT, VLDG…GLLL, IWLP…PLAV, WFIS…VFPM, and LPGA…SLLV. The region spanning 405–486 is the RCK C-terminal domain; the sequence is SGVEIYPKSE…LEALSNLFSQ (82 aa).

The protein belongs to the monovalent cation:proton antiporter 1 (CPA1) transporter (TC 2.A.36) family. NhaP2 subfamily.

It is found in the cell inner membrane. The enzyme catalyses K(+)(in) + H(+)(out) = K(+)(out) + H(+)(in). In terms of biological role, k(+)/H(+) antiporter that extrudes potassium in exchange for external protons and maintains the internal concentration of potassium under toxic levels. In Shewanella oneidensis (strain ATCC 700550 / JCM 31522 / CIP 106686 / LMG 19005 / NCIMB 14063 / MR-1), this protein is K(+)/H(+) antiporter NhaP2.